The sequence spans 1557 residues: ABC transporter atnG (1557 aa).

5 helical membrane-spanning segments follow: residues 27-47, 70-90, 99-119, 131-151, and 159-179; these read FTLYFEEAFLSIFPAATLILA, LKLLLLAPYSISQLLLLAFWM, LTIASTVLRFIATLPCGYLIH, IISIYFLLTLLFDIPLARTIW, and VSAIFIAGTVVKALLLILETW. N-linked (GlcNAc...) asparagine glycans are attached at residues asparagine 202 and asparagine 249. The next 6 helical transmembrane spans lie at 256–276, 311–331, 385–405, 412–432, 490–510, and 531–551; these read AGAMVVPIAKAFKWDLLAGVF, ATLLIGAYALVYGGIAIATAT, YIHDTWASLIEIGIALYLLYN, IAPIIIAFGCTVTAMKIAMMA, LLIAVVGLSNFNTLMTPIVSF, and LTSLTLFNLFAVFIGTLVESI. Residues 279 to 556 enclose the ABC transmembrane type-1 1 domain; the sequence is LCQSGFIISQ…LVESISETAM (278 aa). Positions 593 to 829 constitute an ABC transporter 1 domain; the sequence is AFEVDVGWKN…LDYIQGFAIA (237 aa). 625–632 provides a ligand contact to ATP; the sequence is GAVGCGKT. N-linked (GlcNAc...) asparagine glycosylation is present at asparagine 667. A helical membrane pass occupies residues 882–902; the sequence is LVYFGLMAIFVFLQAFPTVWV. An ABC transmembrane type-1 2 domain is found at 882–1162; the sequence is LVYFGLMAIF…LITDWTVLET (281 aa). N-linked (GlcNAc...) asparagine glycosylation is present at asparagine 916. A run of 4 helical transmembrane segments spans residues 921–941, 996–1016, 1020–1040, and 1105–1125; these read IGVYWMFGVLGACFLLATACF, AVLQTCLALFLCVAQLIIIAV, YITATIPLCVLVYCIIGTFYM, and LSLVLDMTVAGFVLVLMGIAV. N-linked (GlcNAc...) asparagine glycosylation is present at asparagine 1132. The chain crosses the membrane as a helical span at residues 1135–1155; that stretch reads SLGLALVNVVSLSASVKALIT. The ABC transporter 2 domain occupies 1199–1431; it reads VEYKNVSAFY…PSVFRELYKS (233 aa). N-linked (GlcNAc...) asparagine glycosylation is found at asparagine 1203 and asparagine 1218. An ATP-binding site is contributed by 1233 to 1240; the sequence is GRSGSGKS. Disordered regions lie at residues 1439 to 1464 and 1503 to 1557; these read ERQERAEAEARRRERVEKERAEEELR and RTRS…RGLH. The span at 1507-1522 shows a compositional bias: basic and acidic residues; that stretch reads RSRDHSAERRESKRYS.

The protein belongs to the ABC transporter superfamily. ABCC family. Conjugate transporter (TC 3.A.1.208) subfamily.

It localises to the cell membrane. ABC transporter; part of the gene cluster that mediates the biosynthesis of aspercryptins, linear lipopeptides built from six amino acids including 2 highly unusual and nonproteogenic amino acids, 2-amino-octanoic acid (2aoa) and 2-amino-dodecanol (2adol). The protein is ABC transporter atnG of Emericella nidulans (strain FGSC A4 / ATCC 38163 / CBS 112.46 / NRRL 194 / M139) (Aspergillus nidulans).